The primary structure comprises 141 residues: N,N-dimethylformamidase alpha subunit (141 aa).

Heterotetramer of two DmfA1 (alpha) and two DmfA2 (beta) subunits.

It catalyses the reaction N,N-dimethylformamide + H2O = dimethylamine + formate. Its function is as follows. Hydrolyzes N,N-dimethylformamide, and to a lesser extent N,N-dimethylacetamide and N,N-diethylacetamide. Has no activity against the substituted amides N-methylformamide, N-ethylformamide, N-ethylformamide and N-methylacetamide or the unsubstituted amides formamide, nicotinamide, acetoamide, benzamide, acetamide and acrylamide. The chain is N,N-dimethylformamidase alpha subunit from Paracoccus aminophilus.